We begin with the raw amino-acid sequence, 223 residues long: N-terminal Xaa-Pro-Lys N-methyltransferase 1 (223 aa).

The residue at position 1 (methionine 1) is an N-acetylmethionine. N-acetylthreonine; in N-terminal Xaa-Pro-Lys N-methyltransferase 1, N-terminally processed is present on threonine 2. Residues glycine 69, arginine 74, 91-93, 119-120, and glutamine 135 each bind S-adenosyl-L-methionine; these read DVT and LQ.

The protein belongs to the methyltransferase superfamily. NTM1 family.

It localises to the nucleus. It catalyses the reaction N-terminal L-alanyl-L-prolyl-L-lysyl-[protein] + 3 S-adenosyl-L-methionine = N-terminal N,N,N-trimethyl-L-alanyl-L-prolyl-L-lysyl-[protein] + 3 S-adenosyl-L-homocysteine + 3 H(+). It carries out the reaction N-terminal L-seryl-L-prolyl-L-lysyl-[protein] + 3 S-adenosyl-L-methionine = N-terminal N,N,N-trimethyl-L-seryl-L-prolyl-L-lysyl-[protein] + 3 S-adenosyl-L-homocysteine + 3 H(+). The enzyme catalyses N-terminal L-prolyl-L-prolyl-L-lysyl-[protein] + 2 S-adenosyl-L-methionine = N-terminal N,N-dimethyl-L-prolyl-L-prolyl-L-lysyl-[protein] + 2 S-adenosyl-L-homocysteine + 2 H(+). Its function is as follows. Distributive alpha-N-methyltransferase that methylates the N-terminus of target proteins containing the N-terminal motif [Ala/Gly/Pro/Ser]-Pro-Lys when the initiator Met is cleaved. Specifically catalyzes mono-, di- or tri-methylation of the exposed alpha-amino group of the Ala, Gly or Ser residue in the [Ala/Gly/Ser]-Pro-Lys motif and mono- or di-methylation of Pro in the Pro-Pro-Lys motif. Some of the substrates may be primed by NTMT2-mediated monomethylation. Catalyzes the trimethylation of the N-terminal Gly in CENPA (after removal of Met-1). Responsible for the N-terminal methylation of KLHL31, MYL2, MYL3, RB1, RCC1, RPL23A and SET. Required during mitosis for normal bipolar spindle formation and chromosome segregation via its action on RCC1. This is N-terminal Xaa-Pro-Lys N-methyltransferase 1 (Ntmt1) from Rattus norvegicus (Rat).